A 252-amino-acid chain; its full sequence is Eukaryotic translation initiation factor 3 subunit K (252 aa).

In terms of domain architecture, PCI spans 46–225 (FDCYANLALL…VKVPTNKENE (180 aa)).

The protein belongs to the eIF-3 subunit K family. As to quaternary structure, component of the eukaryotic translation initiation factor 3 (eIF-3) complex.

Its subcellular location is the cytoplasm. Functionally, component of the eukaryotic translation initiation factor 3 (eIF-3) complex, which is involved in protein synthesis of a specialized repertoire of mRNAs and, together with other initiation factors, stimulates binding of mRNA and methionyl-tRNAi to the 40S ribosome. The eIF-3 complex specifically targets and initiates translation of a subset of mRNAs involved in cell proliferation. The protein is Eukaryotic translation initiation factor 3 subunit K of Aspergillus terreus (strain NIH 2624 / FGSC A1156).